We begin with the raw amino-acid sequence, 246 residues long: Acetoacetyl-CoA reductase (246 aa).

Residues 12 to 14 (GGI) and 88 to 92 (CAGIT) contribute to the NADP(+) site. Substrate contacts are provided by residues aspartate 94 and 147–150 (QFGQ). The Proton acceptor role is filled by tyrosine 153. 183-186 (PGYV) contributes to the NADP(+) binding site. Residue 184–185 (GY) coordinates substrate.

This sequence belongs to the short-chain dehydrogenases/reductases (SDR) family.

Its subcellular location is the cytoplasm. It catalyses the reaction a (3R)-3-hydroxyacyl-CoA + NADP(+) = a 3-oxoacyl-CoA + NADPH + H(+). It functions in the pathway biopolymer metabolism; poly-(R)-3-hydroxybutanoate biosynthesis. The polypeptide is Acetoacetyl-CoA reductase (Allochromatium vinosum (strain ATCC 17899 / DSM 180 / NBRC 103801 / NCIMB 10441 / D) (Chromatium vinosum)).